An 876-amino-acid polypeptide reads, in one-letter code: ATP-dependent helicase Lhr-Core (876 aa).

Gln-37, Lys-60, Thr-61, Asp-175, Glu-176, Arg-374, and His-377 together coordinate ATP. The Helicase ATP-binding domain maps to 41–232; it reads IPLIKKGKNV…FLVGGNGDYE (192 aa). A DEAH box motif is present at residues 175 to 178; it reads DEIH. One can recognise a Helicase C-terminal domain in the interval 249-421; sequence PVKDLVHATE…NIHVPENPLD (173 aa). A WH domain region spans residues 422-506; that stretch reads VLTQLIVAAS…IFFLNSGTIP (85 aa). Residues 507 to 876 are domain 4; sequence DEAMIPVKME…DLEYTEAGIK (370 aa).

This sequence belongs to the Lhr helicase family. Lhr-Core subfamily. In terms of assembly, monomer.

It carries out the reaction Couples ATP hydrolysis with the unwinding of duplex DNA by translocating in the 3'-5' direction.. It catalyses the reaction ATP + H2O = ADP + phosphate + H(+). Functionally, probably part of a 4-gene DNA damage response locus in which the upstream ups system, in combination with this downstream locus, functions in homologous recombination to rescue Sulfolobales from DNA-damaging threats. DNA helicase that translocates in a 3'-5' direction on single-stranded (ss)DNA. Binds Holliday junction (HJ) DNA, Y-shaped DNA, DNA with a 3'-overhang and single-stranded (ss)DNA with high affinity; binds double-stranded (ds)DNA with less affinity. Has helicase activity on DNA with a 3'-overhang, Y-shaped DNA and HJ DNA. Does not unwind blunt-ended dsDNA or DNA with a 5'-overhang. This Sulfolobus acidocaldarius (strain ATCC 33909 / DSM 639 / JCM 8929 / NBRC 15157 / NCIMB 11770) protein is ATP-dependent helicase Lhr-Core.